Consider the following 863-residue polypeptide: Protein translocase subunit SecA (863 aa).

ATP is bound by residues Q88, 106–110, and D496; that span reads GEGKT. Residues 818–842 form a disordered region; that stretch reads EVKTEPVITKKKPARNEPCPCGSGK. Zn(2+)-binding residues include C836, C838, C847, and C848.

Belongs to the SecA family. As to quaternary structure, monomer and homodimer. Part of the essential Sec protein translocation apparatus which comprises SecA, SecYEG and auxiliary proteins SecDF-YajC and YidC. Zn(2+) serves as cofactor.

The protein localises to the cell inner membrane. The protein resides in the cytoplasm. It catalyses the reaction ATP + H2O + cellular proteinSide 1 = ADP + phosphate + cellular proteinSide 2.. Functionally, part of the Sec protein translocase complex. Interacts with the SecYEG preprotein conducting channel. Has a central role in coupling the hydrolysis of ATP to the transfer of proteins into and across the cell membrane, serving as an ATP-driven molecular motor driving the stepwise translocation of polypeptide chains across the membrane. In Nitratiruptor sp. (strain SB155-2), this protein is Protein translocase subunit SecA.